The primary structure comprises 100 residues: UPF0473 protein lwe1514 (100 aa).

This sequence belongs to the UPF0473 family.

This is UPF0473 protein lwe1514 from Listeria welshimeri serovar 6b (strain ATCC 35897 / DSM 20650 / CCUG 15529 / CIP 8149 / NCTC 11857 / SLCC 5334 / V8).